The following is a 1528-amino-acid chain: MPSTAFILKCLEFTDTGEEVVLVAWNKTENYIAAGGQTGSIRILLLDFNSLSEQGYNISDLRTSTRNVRILMDKKLSLHDNALITSIAWNEKETKLATSDNRGLVFISSTDTGKWVRNLVNDSNRAAVVTTTWSPDASRILMVYVNGLVMLGTASGHRIYNGTINKGSAPKFGLIASNAIEVFILAWGNAICCYNFSGEEVWSVSPLLATNSDNHFVHGCWGHSSESAQLTALSPSRDPACNGSSMPQIKINSFSGDSMTLIAVTSNGMLCVYSVLTGELLSSVSTEIIPVNVQLSPGSHMLCITGSVQSSDSNFGLHQLRGNQGVSGDSTKHTAIVVVYRTADLATISRLRLPERVATSSSWDSTGLRLVLAAGKNIYIATVRPSYNHYLMNDGTMAFTMSNYTSTILSTASFVDDTQRPPMNVGALFSKKTAEEAPSSAISSFEERILDRARCNECVLFWKPGLQAPYQRWPARMIAVVGCKSYIAILTLKTNTSGTRKHHTHICFYTSVCAPIFSIDLPYVPFYTAGSGNYLVCASSSRISVVDIRGLANEAIGLVDAENVSYVYEWHADSYPLAQDRELTVARLTVNNPIVGVACCDVALFVARQDERVQRYSLPSLTLLETMTIKPNQEYMQTNCNGTVLACLHEDGSLVFYYTQSYYSEFLYAHHNPAEQQQQKQQPAPKPPQAQAHLTLLDTDADTAAALGFGQDSVVETESAPYVIKNSVLKNVNVSSGELLQDSAQARSGGVSTIPPYSPELIGIWGLVFSPEDPNLVAVSSQYKVIVFHLDTQTREDSIQTSAHIIGFSGLSIIASYLDEVSHNISSLDHAYYVLETQMLRELQEIIFGQQQAPESFNPLVDAALNRGCLNKNMISLTSDSKSGVPSSLFDSVAPKTIAIKPVRGQQPVGDMVDSGLDVTASNSSQPSTQTSQALYSKDGQISINLAGAVEYVKSHPSVHLYRIVAEASLITLRLEVASYFYIRAGDYVSYNFCESLLRLQSQDQRRAEMLMLIGNFSSAEHVYKQVLGRPDLIVKTQTDLQMWLSIIRAAKLSRTPGGNLLIDDKLLEKAHKSIGLYYMRQQQYAIASDFLQKSGDPYLYAESLFAARRYAELKALAVSLPVDEFANCIAKVAVMLARLGDVEGASEALVRVNDPHSAVHISLQLKRFDIAAAIAGKHNILHIIDRELSVYLKQLLAAGDDQGALELLRKTKQGEVIAAVIINLVLKELQTIFVNRTFPMPPGLFSKLRRIIVLAGKEATYVQREQAKKNLQAHASAAPDCMLTEQATNAAIDTFINEDDNSKAVHDVKAKNTGKEASSLEHELENAQSRLRSVPVIWRIARQTRFIVLSSYMLYIGNPEQALWPAIEAANYYHRTNDSQSSADPCIQYLSRIALPIAAQAALLFGDFELASNLLELIEADTELPASERDQLEQMSVLIYSEYNITSVPSKRKDNYQINCGHCNTLLPPYCGMCEKCHWQTPICVRTGQPIKSDKMDKTVLCQMCRSLATMGKTHLSVCPLCHEPYQ.

WD repeat units lie at residues 123 to 170 (SNRA…GSAP), 244 to 285 (SSMP…SSVS), 619 to 667 (PSLT…SEFL), and 759 to 798 (PELIGIWGLVFSPEDPNLVAVSSQYKVIVFHLDTQTREDS). A disordered region spans residues 914 to 933 (DSGLDVTASNSSQPSTQTSQ). The segment covering 920–933 (TASNSSQPSTQTSQ) has biased composition (low complexity).

The protein localises to the cell projection. Its subcellular location is the cilium. It localises to the flagellum. The protein resides in the cytoplasm. It is found in the cytoskeleton. The protein localises to the flagellum axoneme. Its subcellular location is the flagellum basal body. Component of the intraflagellar transport complex A (IFT-A) involved in flagellar assembly. In Giardia intestinalis (strain ATCC 50803 / WB clone C6) (Giardia lamblia), this protein is Intraflagellar transport protein 121.